A 149-amino-acid polypeptide reads, in one-letter code: Ribosome-binding factor A (149 aa).

Residues 116 to 125 (TLFEELHPNP) are compositionally biased toward basic and acidic residues. The segment at 116-149 (TLFEELHPNPEEDDGDTDAETLLEDSESGIERET) is disordered. Residues 126–143 (EEDDGDTDAETLLEDSES) show a composition bias toward acidic residues.

It belongs to the RbfA family. In terms of assembly, monomer. Binds 30S ribosomal subunits, but not 50S ribosomal subunits or 70S ribosomes.

It localises to the cytoplasm. Functionally, one of several proteins that assist in the late maturation steps of the functional core of the 30S ribosomal subunit. Associates with free 30S ribosomal subunits (but not with 30S subunits that are part of 70S ribosomes or polysomes). Required for efficient processing of 16S rRNA. May interact with the 5'-terminal helix region of 16S rRNA. The protein is Ribosome-binding factor A of Leptospira biflexa serovar Patoc (strain Patoc 1 / Ames).